We begin with the raw amino-acid sequence, 329 residues long: Malate dehydrogenase (329 aa).

NAD(+) is bound at residue 12 to 18 (GAAGQIG). The substrate site is built by arginine 93 and arginine 99. NAD(+) is bound by residues asparagine 106, glutamine 113, and 130–132 (TGN). Substrate contacts are provided by asparagine 132 and arginine 163. The Proton acceptor role is filled by histidine 188.

Belongs to the LDH/MDH superfamily. MDH type 2 family.

It carries out the reaction (S)-malate + NAD(+) = oxaloacetate + NADH + H(+). Its function is as follows. Catalyzes the reversible oxidation of malate to oxaloacetate. The chain is Malate dehydrogenase from Mycobacterium avium (strain 104).